The following is a 145-amino-acid chain: D-aminoacyl-tRNA deacylase (145 aa).

Positions 137–138 match the Gly-cisPro motif, important for rejection of L-amino acids motif; that stretch reads GP.

It belongs to the DTD family. Homodimer.

Its subcellular location is the cytoplasm. It carries out the reaction glycyl-tRNA(Ala) + H2O = tRNA(Ala) + glycine + H(+). The enzyme catalyses a D-aminoacyl-tRNA + H2O = a tRNA + a D-alpha-amino acid + H(+). An aminoacyl-tRNA editing enzyme that deacylates mischarged D-aminoacyl-tRNAs. Also deacylates mischarged glycyl-tRNA(Ala), protecting cells against glycine mischarging by AlaRS. Acts via tRNA-based rather than protein-based catalysis; rejects L-amino acids rather than detecting D-amino acids in the active site. By recycling D-aminoacyl-tRNA to D-amino acids and free tRNA molecules, this enzyme counteracts the toxicity associated with the formation of D-aminoacyl-tRNA entities in vivo and helps enforce protein L-homochirality. The protein is D-aminoacyl-tRNA deacylase of Shewanella sediminis (strain HAW-EB3).